The chain runs to 88 residues: Large ribosomal subunit protein eL31 (88 aa).

Belongs to the eukaryotic ribosomal protein eL31 family.

In Sulfurisphaera tokodaii (strain DSM 16993 / JCM 10545 / NBRC 100140 / 7) (Sulfolobus tokodaii), this protein is Large ribosomal subunit protein eL31 (rpl31e).